A 387-amino-acid chain; its full sequence is Probable serine protease FE772_23060 (387 aa).

This sequence belongs to the peptidase S1 family.

Functionally, possibly a dedicated protease for substrate gasdermin bGSDM; cleaves the bGSDM precursor, releasing the pore-forming moiety, which integrates into the membrane and triggers cell death. Involved in defense against bacteriophages. When this probable 4 gene operon (bGSDM-FE772_23060-FE772_23065-FE772_23070) is inserted into E.coli it provides nearly 100-fold protection against phages T5 and T6 and about 8-fold against phage T4. The operon without bGSDM no longer protects against phage. The chain is Probable serine protease FE772_23060 from Lysobacter enzymogenes.